The sequence spans 133 residues: ATP synthase epsilon chain (133 aa).

This sequence belongs to the ATPase epsilon chain family. F-type ATPases have 2 components, CF(1) - the catalytic core - and CF(0) - the membrane proton channel. CF(1) has five subunits: alpha(3), beta(3), gamma(1), delta(1), epsilon(1). CF(0) has three main subunits: a, b and c.

Its subcellular location is the cell membrane. In terms of biological role, produces ATP from ADP in the presence of a proton gradient across the membrane. The chain is ATP synthase epsilon chain (atpC) from Mycoplasma pneumoniae (strain ATCC 29342 / M129 / Subtype 1) (Mycoplasmoides pneumoniae).